Reading from the N-terminus, the 435-residue chain is Serine--tRNA ligase (435 aa).

Position 242–244 (242–244 (TAE)) interacts with L-serine. 273–275 (RSE) is an ATP binding site. Glu-296 is an L-serine binding site. Residue 360–363 (EISS) participates in ATP binding. Ser-396 serves as a coordination point for L-serine.

It belongs to the class-II aminoacyl-tRNA synthetase family. Type-1 seryl-tRNA synthetase subfamily. Homodimer. The tRNA molecule binds across the dimer.

It localises to the cytoplasm. It catalyses the reaction tRNA(Ser) + L-serine + ATP = L-seryl-tRNA(Ser) + AMP + diphosphate + H(+). The catalysed reaction is tRNA(Sec) + L-serine + ATP = L-seryl-tRNA(Sec) + AMP + diphosphate + H(+). The protein operates within aminoacyl-tRNA biosynthesis; selenocysteinyl-tRNA(Sec) biosynthesis; L-seryl-tRNA(Sec) from L-serine and tRNA(Sec): step 1/1. Its function is as follows. Catalyzes the attachment of serine to tRNA(Ser). Is also able to aminoacylate tRNA(Sec) with serine, to form the misacylated tRNA L-seryl-tRNA(Sec), which will be further converted into selenocysteinyl-tRNA(Sec). The chain is Serine--tRNA ligase from Vibrio vulnificus (strain CMCP6).